A 120-amino-acid chain; its full sequence is MSKLKVTNARRKQRVRLSLRRTANGRPRLSVFRSSKHIYAQVIDDLKGETLASASSLEKTMRDAGNTGANIDAAKAVGKLLAERAVKNGVKEVVFDRGSYLYHGRVKALADAARESGLSF.

Belongs to the universal ribosomal protein uL18 family. In terms of assembly, part of the 50S ribosomal subunit; part of the 5S rRNA/L5/L18/L25 subcomplex. Contacts the 5S and 23S rRNAs.

Functionally, this is one of the proteins that bind and probably mediate the attachment of the 5S RNA into the large ribosomal subunit, where it forms part of the central protuberance. This is Large ribosomal subunit protein uL18 from Nitrobacter hamburgensis (strain DSM 10229 / NCIMB 13809 / X14).